Here is a 137-residue protein sequence, read N- to C-terminus: MNITELMELFSNPETIKTLETGDLMTGIGVTVVLGMGITVVALIFLMYIIGGMAAIMAEKPKEVKETAAAAPKPEAAAAPAPAANNDEELVAVIAAAVAAQLGTSASNLIIRNVTRSLDTTPAWGRAGIVDQMATRL.

The chain crosses the membrane as a helical span at residues 30–50 (VTVVLGMGITVVALIFLMYII).

Belongs to the OadG family. In terms of assembly, the methylmalonyl-CoA decarboxylase is composed of four subunits: the carboxyltransferase alpha subunit (MmdA), the tunnel beta subunit (MmdB), the biotin-containing gamma subunit (MmdC) and the delta subunit (MmdD).

It localises to the cell membrane. It carries out the reaction (S)-methylmalonyl-CoA + Na(+)(in) + H(+)(out) = propanoyl-CoA + Na(+)(out) + CO2. Its function is as follows. Subunit of the sodium ion pump methylmalonyl-CoA decarboxylase, which converts the chemical energy of a decarboxylation reaction into an electrochemical gradient of Na(+) ions across the cytoplasmic membrane, thereby creating a sodium ion motive force that is used for ATP synthesis. The delta subunit is required for catalytic activity as well as for the proper assembly of the individual subunits to an enzyme complex. This chain is Methylmalonyl-CoA decarboxylase subunit delta, found in Propionigenium modestum.